A 313-amino-acid chain; its full sequence is tRNA-cytidine(32) 2-sulfurtransferase (313 aa).

The PP-loop motif signature appears at 47-52 (SGGKDS). 3 residues coordinate [4Fe-4S] cluster: Cys122, Cys125, and Cys213.

The protein belongs to the TtcA family. As to quaternary structure, homodimer. It depends on Mg(2+) as a cofactor. Requires [4Fe-4S] cluster as cofactor.

Its subcellular location is the cytoplasm. The catalysed reaction is cytidine(32) in tRNA + S-sulfanyl-L-cysteinyl-[cysteine desulfurase] + AH2 + ATP = 2-thiocytidine(32) in tRNA + L-cysteinyl-[cysteine desulfurase] + A + AMP + diphosphate + H(+). Its pathway is tRNA modification. Catalyzes the ATP-dependent 2-thiolation of cytidine in position 32 of tRNA, to form 2-thiocytidine (s(2)C32). The sulfur atoms are provided by the cysteine/cysteine desulfurase (IscS) system. The chain is tRNA-cytidine(32) 2-sulfurtransferase from Yersinia pseudotuberculosis serotype IB (strain PB1/+).